A 333-amino-acid chain; its full sequence is 4-hydroxyproline epimerase (333 aa).

The active-site Proton acceptor is Cys-90. Substrate-binding positions include 91-92 (GH) and Asp-249. Cys-253 acts as the Proton donor in catalysis. Position 254 to 255 (254 to 255 (GT)) interacts with substrate.

Belongs to the proline racemase family. Homodimer.

It catalyses the reaction trans-4-hydroxy-L-proline = cis-4-hydroxy-D-proline. Inhibited by iodoacetate, iodoacetamide and by high amounts (10 mM) of pyrrole-2-carboxylic acid (PYC). Not inhibited by PYC at 1 mM. Its function is as follows. Allows intracellular utilization of 4-hydroxyproline, one of the major constituents of host collagen, by converting 4-hydroxy-L-proline to 4-hydroxy-D-proline, which can be further metabolized by intracellular 4-hydroxy-D-proline oxidases. Strong B-cell mitogen. Plays an important role in the regulation of intra- and extracellular amino acid pools, allowing the bacterium to profit from host precursors and enzymatic pathways. This chain is 4-hydroxyproline epimerase, found in Brucella melitensis biotype 1 (strain ATCC 23456 / CCUG 17765 / NCTC 10094 / 16M).